The following is a 651-amino-acid chain: Mediator of RNA polymerase II transcription subunit 17 (651 aa).

The disordered stretch occupies residues 51-83 (QGSGSEEEEAAGAEGDAQDWAGAGSSADQDDEE). A compositionally biased stretch (low complexity) spans 62–74 (GAEGDAQDWAGAG).

The protein belongs to the Mediator complex subunit 17 family. As to quaternary structure, component of the Mediator complex, which is composed of MED1, MED4, MED6, MED7, MED8, MED9, MED10, MED11, MED12, MED13, MED13L, MED14, MED15, MED16, MED17, MED18, MED19, MED20, MED21, MED22, MED23, MED24, MED25, MED26, MED27, MED29, MED30, MED31, CCNC, CDK8 and CDC2L6/CDK11. The MED12, MED13, CCNC and CDK8 subunits form a distinct module termed the CDK8 module. Mediator containing the CDK8 module is less active than Mediator lacking this module in supporting transcriptional activation. Individual preparations of the Mediator complex lacking one or more distinct subunits have been variously termed ARC, CRSP, DRIP, PC2, SMCC and TRAP. Interacts with GATA1, PPARG and STAT2.

The protein localises to the nucleus. Functionally, component of the Mediator complex, a coactivator involved in the regulated transcription of nearly all RNA polymerase II-dependent genes. Mediator functions as a bridge to convey information from gene-specific regulatory proteins to the basal RNA polymerase II transcription machinery. Mediator is recruited to promoters by direct interactions with regulatory proteins and serves as a scaffold for the assembly of a functional preinitiation complex with RNA polymerase II and the general transcription factors. The sequence is that of Mediator of RNA polymerase II transcription subunit 17 (MED17) from Bos taurus (Bovine).